The following is a 221-amino-acid chain: MASLISDIEPPTSTTSDLVRRKKRSSASSAASSRSSASSVSGEIHARWRSEKQQRIYSAKLFQALQQVRLNSSASTSSSPTAQKRGKAVREAADRALAVSARGRTLWSRAILANRIKLKFRKQRRPRATMAIPAMTTVVSSSSNRSRKRRVSVLRLNKKSIPDVNRKVRVLGRLVPGCGKQSVPVILEEATDYIQALEMQVRAMNSLVQLLSSYGSAPPPI.

2 disordered regions span residues 1–45 (MASL…GEIH) and 70–89 (LNSS…GKAV). Composition is skewed to low complexity over residues 26-41 (SASS…SSVS) and 72-82 (SSASTSSSPTA). The 50-residue stretch at 148 to 197 (KRRVSVLRLNKKSIPDVNRKVRVLGRLVPGCGKQSVPVILEEATDYIQAL) folds into the bHLH domain.

As to quaternary structure, homodimer. Interacts with PRE3. Binds to RSA1.

It is found in the nucleus. BHLH transcription factor that binds DNA on specific sequence 5'-CANNTG-3' in target gene promoters. Negatively regulates brassinosteroid signaling. Together with BHLH148/RITF1, regulates the transcription of several genes involved in the detoxification of reactive oxygen species (ROS) generated by salt (NaCl) stress. Confers tolerance to salt and to the oxidative stress-inducing reagents hydrogen peroxide H(2)O(2) and methyl viologen (MV). This chain is Transcription factor bHLH148, found in Arabidopsis thaliana (Mouse-ear cress).